Consider the following 185-residue polypeptide: MVNEIFEHTKENMDKSLEALKRDFASLRTGKVTTNIVDNIKVDYYGTPTPLNQVGSVIATDATTISITPWEKNLLSDIERAIQEANIGVNPNNDGDFIKLFFPPMTSEQRQEIVKQAKAMAENARVAIRNIRKDANNKIKKLEKDKEISEDESKRAHDEIQKITDDHIGMVDELFKAKEADILKV.

The protein belongs to the RRF family.

Its subcellular location is the cytoplasm. Functionally, responsible for the release of ribosomes from messenger RNA at the termination of protein biosynthesis. May increase the efficiency of translation by recycling ribosomes from one round of translation to another. In Sulfurovum sp. (strain NBC37-1), this protein is Ribosome-recycling factor.